Here is a 419-residue protein sequence, read N- to C-terminus: Delta(8)-fatty-acid desaturase (419 aa).

In terms of domain architecture, Cytochrome b5 heme-binding spans Met1–Ser64. Residues His24 and His47 each coordinate heme. Residues Leu110–Leu130 form a helical membrane-spanning segment. The short motif at His143–His147 is the Histidine box-1 element. The chain crosses the membrane as a helical span at residues Trp156–Trp176. The Histidine box-2 signature appears at His180–His184. Transmembrane regions (helical) follow at residues Tyr226–Val246, Ile266–Ile286, and Leu290–Met310. Residues Gln355–His359 carry the Histidine box-3 motif.

Belongs to the fatty acid desaturase type 1 family. Requires Fe cation as cofactor.

It is found in the membrane. It catalyses the reaction an (11Z,14Z)-icosadienoyl-containing glycerolipid + 2 Fe(II)-[cytochrome b5] + O2 + 2 H(+) = an (8Z,11Z,14Z)-icosatrienoyl-containing glycerolipid + 2 Fe(III)-[cytochrome b5] + 2 H2O. The enzyme catalyses an (11Z,14Z,17Z)-icosatrienoyl-containing glycerolipid + 2 Fe(II)-[cytochrome b5] + O2 + 2 H(+) = an (8Z,11Z,14Z,17Z)-eicosatetraenoyl-containing glycerolipid + 2 Fe(III)-[cytochrome b5] + 2 H2O. The catalysed reaction is an (11Z)-eicosenoyl-containing glycerolipid + 2 Fe(II)-[cytochrome b5] + O2 + 2 H(+) = a (8Z,11Z)-eicosadienoyl-containing glycerolipid + 2 Fe(III)-[cytochrome b5] + 2 H2O. It functions in the pathway lipid metabolism; fatty acid metabolism. Its function is as follows. Delta(8)-fatty-acid desaturase which introduces a double bond at the 8-position in 20-carbon chain length fatty acids (C20) that have an existing delta-11 unsaturation (double bond). Whether it acts on CoA-linked substrates (as in animals) or phospholipid-linked substrates (as in plants and fungi) is still not clear. This Euglena gracilis protein is Delta(8)-fatty-acid desaturase (efd1).